The sequence spans 321 residues: Lipoyl synthase (321 aa).

Residues C60, C65, C71, C86, C90, C93, and S299 each contribute to the [4Fe-4S] cluster site. The Radical SAM core domain occupies 72 to 288 (WEKKHATFMI…ETIGRTKGFL (217 aa)).

The protein belongs to the radical SAM superfamily. Lipoyl synthase family. [4Fe-4S] cluster is required as a cofactor.

The protein localises to the cytoplasm. It catalyses the reaction [[Fe-S] cluster scaffold protein carrying a second [4Fe-4S](2+) cluster] + N(6)-octanoyl-L-lysyl-[protein] + 2 oxidized [2Fe-2S]-[ferredoxin] + 2 S-adenosyl-L-methionine + 4 H(+) = [[Fe-S] cluster scaffold protein] + N(6)-[(R)-dihydrolipoyl]-L-lysyl-[protein] + 4 Fe(3+) + 2 hydrogen sulfide + 2 5'-deoxyadenosine + 2 L-methionine + 2 reduced [2Fe-2S]-[ferredoxin]. It functions in the pathway protein modification; protein lipoylation via endogenous pathway; protein N(6)-(lipoyl)lysine from octanoyl-[acyl-carrier-protein]: step 2/2. In terms of biological role, catalyzes the radical-mediated insertion of two sulfur atoms into the C-6 and C-8 positions of the octanoyl moiety bound to the lipoyl domains of lipoate-dependent enzymes, thereby converting the octanoylated domains into lipoylated derivatives. This is Lipoyl synthase from Mesorhizobium japonicum (strain LMG 29417 / CECT 9101 / MAFF 303099) (Mesorhizobium loti (strain MAFF 303099)).